The chain runs to 862 residues: Leucine--tRNA ligase (862 aa).

The 'HIGH' region motif lies at 51-61; that stretch reads PYPSGSLHMGH. The 'KMSKS' region motif lies at 624–628; it reads KMSKS. Lys627 is an ATP binding site.

It belongs to the class-I aminoacyl-tRNA synthetase family.

The protein localises to the cytoplasm. The enzyme catalyses tRNA(Leu) + L-leucine + ATP = L-leucyl-tRNA(Leu) + AMP + diphosphate. The polypeptide is Leucine--tRNA ligase (Prochlorococcus marinus (strain NATL1A)).